Consider the following 101-residue polypeptide: Large ribosomal subunit protein uL24 (101 aa).

Belongs to the universal ribosomal protein uL24 family. As to quaternary structure, part of the 50S ribosomal subunit.

In terms of biological role, one of two assembly initiator proteins, it binds directly to the 5'-end of the 23S rRNA, where it nucleates assembly of the 50S subunit. Functionally, one of the proteins that surrounds the polypeptide exit tunnel on the outside of the subunit. This Borrelia recurrentis (strain A1) protein is Large ribosomal subunit protein uL24.